Here is a 291-residue protein sequence, read N- to C-terminus: Urease accessory protein UreD (291 aa).

This sequence belongs to the UreD family. As to quaternary structure, ureD, UreF and UreG form a complex that acts as a GTP-hydrolysis-dependent molecular chaperone, activating the urease apoprotein by helping to assemble the nickel containing metallocenter of UreC. The UreE protein probably delivers the nickel.

It localises to the cytoplasm. Functionally, required for maturation of urease via the functional incorporation of the urease nickel metallocenter. This chain is Urease accessory protein UreD, found in Acinetobacter baumannii (strain SDF).